Consider the following 180-residue polypeptide: Putative manganese efflux pump MntP (180 aa).

A run of 6 helical transmembrane segments spans residues 4–24, 40–60, 64–84, 103–123, 129–149, and 156–176; these read FVTI…VALG, LTIG…GKWL, FDVI…VQMA, LLLF…SFGI, FVTV…GLIV, and FLGA…GLKI.

The protein belongs to the MntP (TC 9.B.29) family.

Its subcellular location is the cell membrane. Probably functions as a manganese efflux pump. The sequence is that of Putative manganese efflux pump MntP from Shouchella clausii (strain KSM-K16) (Alkalihalobacillus clausii).